The following is an 850-amino-acid chain: Vacuolar membrane protease (850 aa).

The Cytoplasmic portion of the chain corresponds to 1-20; that stretch reads MASSRAQWFNPIAFTPWPVT. The helical transmembrane segment at 21–41 threads the bilayer; the sequence is CITTIVYLALLIPILVINLVV. Over 42–282 the chain is Vacuolar; sequence PSAPETNPKG…DGKSKDQNKV (241 aa). Residues asparagine 53, asparagine 116, and asparagine 119 are each glycosylated (N-linked (GlcNAc...) asparagine). Zn(2+) contacts are provided by histidine 175 and aspartate 187. The Proton acceptor role is filled by glutamate 221. Position 222 (glutamate 222) interacts with Zn(2+). Residues 283-303 form a helical membrane-spanning segment; the sequence is NSGTGTLGVWFDMFGTAFAVF. Residues 304 to 308 are Cytoplasmic-facing; sequence RLHTL. The helical transmembrane segment at 309–329 threads the bilayer; sequence FAISVALLVIAPLVIFVTSVI. Topologically, residues 330–363 are vacuolar; it reads LSKTDRMYLFSMSKSLEGTGDQVSLRGLRGFSRT. The chain crosses the membrane as a helical span at residues 364-384; sequence PIILVIATTIPICLAYLLEKV. Over 385-393 the chain is Cytoplasmic; that stretch reads NPYIVHSSQ. A helical membrane pass occupies residues 394–414; that stretch reads FSVWSMMFSAWIFLAWFLACA. At 415–425 the chain is on the vacuolar side; sequence ADFFRPSALHR. Residues 426–446 form a helical membrane-spanning segment; that stretch reads AYSYTWIFIATWIMLVINTVY. Residues 447 to 529 are Cytoplasmic-facing; that stretch reads ANQKGIAAGP…TLPRWTWVLQ (83 aa). Residues 530–550 traverse the membrane as a helical segment; that stretch reads LLLLAPIVLILVGQLALFLTA. At 551–563 the chain is on the vacuolar side; that stretch reads SMCQVGSDGVSTF. The helical transmembrane segment at 564–584 threads the bilayer; the sequence is VVYLACSVFTTLLCIPLFPLI. Residues 585-590 lie on the Cytoplasmic side of the membrane; sequence HRFTYH. The helical transmembrane segment at 591–611 threads the bilayer; sequence IPTFLFLVFIGTLIYNLVAFP. Residues 612 to 850 lie on the Vacuolar side of the membrane; that stretch reads FSPANRLKTF…VEASHSFTIQ (239 aa). 3 N-linked (GlcNAc...) asparagine glycosylation sites follow: asparagine 630, asparagine 658, and asparagine 702.

This sequence belongs to the peptidase M28 family. The cofactor is Zn(2+).

It is found in the vacuole membrane. May be involved in vacuolar sorting and osmoregulation. The sequence is that of Vacuolar membrane protease from Ajellomyces capsulatus (strain NAm1 / WU24) (Darling's disease fungus).